Reading from the N-terminus, the 206-residue chain is Small ribosomal subunit protein uS4 (206 aa).

The tract at residues 23 to 47 (AKSPLNRREYGPGQHGQRRKGKLSD) is disordered. The S4 RNA-binding domain maps to 94–157 (RRLDAVIYRA…RQLAIVLESV (64 aa)).

This sequence belongs to the universal ribosomal protein uS4 family. Part of the 30S ribosomal subunit. Contacts protein S5. The interaction surface between S4 and S5 is involved in control of translational fidelity.

In terms of biological role, one of the primary rRNA binding proteins, it binds directly to 16S rRNA where it nucleates assembly of the body of the 30S subunit. Functionally, with S5 and S12 plays an important role in translational accuracy. In Paracoccus denitrificans (strain Pd 1222), this protein is Small ribosomal subunit protein uS4.